We begin with the raw amino-acid sequence, 459 residues long: Ribulose bisphosphate carboxylase large chain (459 aa).

At Lys-4 the chain carries N6,N6,N6-trimethyllysine. Substrate contacts are provided by Asn-113 and Thr-163. Residue Lys-165 is the Proton acceptor of the active site. Lys-167 serves as a coordination point for substrate. Mg(2+) is bound by residues Lys-191, Asp-193, and Glu-194. Lys-191 carries the post-translational modification N6-carboxylysine. Catalysis depends on His-284, which acts as the Proton acceptor. Substrate-binding residues include Arg-285, His-317, and Ser-369.

It belongs to the RuBisCO large chain family. Type I subfamily. Heterohexadecamer of 8 large chains and 8 small chains; disulfide-linked. The disulfide link is formed within the large subunit homodimers. Mg(2+) is required as a cofactor. In terms of processing, the disulfide bond which can form in the large chain dimeric partners within the hexadecamer appears to be associated with oxidative stress and protein turnover.

It is found in the plastid. The protein resides in the chloroplast. The enzyme catalyses 2 (2R)-3-phosphoglycerate + 2 H(+) = D-ribulose 1,5-bisphosphate + CO2 + H2O. It carries out the reaction D-ribulose 1,5-bisphosphate + O2 = 2-phosphoglycolate + (2R)-3-phosphoglycerate + 2 H(+). In terms of biological role, ruBisCO catalyzes two reactions: the carboxylation of D-ribulose 1,5-bisphosphate, the primary event in carbon dioxide fixation, as well as the oxidative fragmentation of the pentose substrate in the photorespiration process. Both reactions occur simultaneously and in competition at the same active site. In Nypa fruticans (Nypa palm), this protein is Ribulose bisphosphate carboxylase large chain.